An 862-amino-acid chain; its full sequence is DNA mismatch repair protein MutS (862 aa).

608 to 615 (GPNMAGKS) contacts ATP.

The protein belongs to the DNA mismatch repair MutS family.

Functionally, this protein is involved in the repair of mismatches in DNA. It is possible that it carries out the mismatch recognition step. This protein has a weak ATPase activity. The sequence is that of DNA mismatch repair protein MutS from Bacteroides fragilis (strain YCH46).